Here is a 307-residue protein sequence, read N- to C-terminus: Dihydroorotate dehydrogenase B (NAD(+)), catalytic subunit (307 aa).

FMN is bound by residues S20 and 44–45 (KT). Substrate is bound by residues K44 and 68 to 72 (NSIGL). FMN is bound by residues N98 and N126. N126 serves as a coordination point for substrate. C129 acts as the Nucleophile in catalysis. FMN contacts are provided by K164 and I190. Substrate is bound at residue 191-192 (NT). FMN is bound by residues G216, 242–243 (GG), and 264–265 (GS).

The protein belongs to the dihydroorotate dehydrogenase family. Type 1 subfamily. Heterotetramer of 2 PyrK and 2 PyrD type B subunits. FMN is required as a cofactor.

The protein localises to the cytoplasm. The enzyme catalyses (S)-dihydroorotate + NAD(+) = orotate + NADH + H(+). It functions in the pathway pyrimidine metabolism; UMP biosynthesis via de novo pathway; orotate from (S)-dihydroorotate (NAD(+) route): step 1/1. Its function is as follows. Catalyzes the conversion of dihydroorotate to orotate with NAD(+) as electron acceptor. This is Dihydroorotate dehydrogenase B (NAD(+)), catalytic subunit (pyrD) from Carboxydothermus hydrogenoformans (strain ATCC BAA-161 / DSM 6008 / Z-2901).